A 209-amino-acid chain; its full sequence is tRNA (guanine-N(7)-)-methyltransferase (209 aa).

S-adenosyl-L-methionine-binding residues include D35, E60, N87, and D113. D113 is an active-site residue. The substrate site is built by K117 and D149.

This sequence belongs to the class I-like SAM-binding methyltransferase superfamily. TrmB family.

The catalysed reaction is guanosine(46) in tRNA + S-adenosyl-L-methionine = N(7)-methylguanosine(46) in tRNA + S-adenosyl-L-homocysteine. It participates in tRNA modification; N(7)-methylguanine-tRNA biosynthesis. Functionally, catalyzes the formation of N(7)-methylguanine at position 46 (m7G46) in tRNA. The chain is tRNA (guanine-N(7)-)-methyltransferase from Prochlorococcus marinus (strain MIT 9215).